Here is a 137-residue protein sequence, read N- to C-terminus: Cellular retinoic acid-binding protein 1 (137 aa).

A Nuclear localization signal motif is present at residues 21–31 (KALGVNAMLRK). 132 to 134 (RIY) contributes to the all-trans-retinoate binding site.

It belongs to the calycin superfamily. Fatty-acid binding protein (FABP) family.

Its subcellular location is the cytoplasm. Cytosolic CRABPs may regulate the access of retinoic acid to the nuclear retinoic acid receptors. The protein is Cellular retinoic acid-binding protein 1 (Crabp1) of Mus musculus (Mouse).